Reading from the N-terminus, the 329-residue chain is Protein RecA (329 aa).

Residue 63-70 (GNESSGKT) participates in ATP binding.

Belongs to the RecA family.

Its subcellular location is the cytoplasm. In terms of biological role, can catalyze the hydrolysis of ATP in the presence of single-stranded DNA, the ATP-dependent uptake of single-stranded DNA by duplex DNA, and the ATP-dependent hybridization of homologous single-stranded DNAs. It interacts with LexA causing its activation and leading to its autocatalytic cleavage. This chain is Protein RecA, found in Malacoplasma penetrans (strain HF-2) (Mycoplasma penetrans).